We begin with the raw amino-acid sequence, 134 residues long: ATP synthase epsilon chain (134 aa).

It belongs to the ATPase epsilon chain family. F-type ATPases have 2 components, CF(1) - the catalytic core - and CF(0) - the membrane proton channel. CF(1) has five subunits: alpha(3), beta(3), gamma(1), delta(1), epsilon(1). CF(0) has three main subunits: a, b and c.

Its subcellular location is the cell inner membrane. Its function is as follows. Produces ATP from ADP in the presence of a proton gradient across the membrane. This is ATP synthase epsilon chain from Nitratidesulfovibrio vulgaris (strain DSM 19637 / Miyazaki F) (Desulfovibrio vulgaris).